Consider the following 227-residue polypeptide: Guanylate kinase (227 aa).

Residues 21-199 (GNLFMVVAPS…ALAELECIVA (179 aa)) enclose the Guanylate kinase-like domain. 28–35 (APSGAGKS) contributes to the ATP binding site.

It belongs to the guanylate kinase family.

Its subcellular location is the cytoplasm. It catalyses the reaction GMP + ATP = GDP + ADP. Its function is as follows. Essential for recycling GMP and indirectly, cGMP. In Burkholderia mallei (strain ATCC 23344), this protein is Guanylate kinase.